Consider the following 260-residue polypeptide: NH(3)-dependent NAD(+) synthetase (260 aa).

31-38 (GLSGGLDS) is a binding site for ATP. Aspartate 37 is a binding site for Mg(2+). Arginine 112 contacts deamido-NAD(+). ATP is bound at residue threonine 132. Residue glutamate 137 participates in Mg(2+) binding. Positions 161 and 183 each coordinate ATP.

The protein belongs to the NAD synthetase family. In terms of assembly, homodimer.

It catalyses the reaction deamido-NAD(+) + NH4(+) + ATP = AMP + diphosphate + NAD(+) + H(+). It functions in the pathway cofactor biosynthesis; NAD(+) biosynthesis; NAD(+) from deamido-NAD(+) (ammonia route): step 1/1. Catalyzes the ATP-dependent amidation of deamido-NAD to form NAD. Uses ammonia as a nitrogen source. The protein is NH(3)-dependent NAD(+) synthetase of Helicobacter pylori (strain G27).